Reading from the N-terminus, the 113-residue chain is Large ribosomal subunit protein bL19 (113 aa).

This sequence belongs to the bacterial ribosomal protein bL19 family.

This protein is located at the 30S-50S ribosomal subunit interface and may play a role in the structure and function of the aminoacyl-tRNA binding site. The polypeptide is Large ribosomal subunit protein bL19 (Mycobacterium sp. (strain JLS)).